The primary structure comprises 481 residues: Glucan endo-1,3-beta-glucosidase 8 (481 aa).

Residues 1–33 (MSNLLALVVGFVIVIGHLGILVNGLGVNWGTMA) form the signal peptide. N-linked (GlcNAc...) asparagine glycosylation is found at Asn99 and Asn110. The active-site Proton donor is Glu119. Residues Asn126 and Asn131 are each glycosylated (N-linked (GlcNAc...) asparagine). The active-site Nucleophile is Glu265. Residues Cys367 and Cys428 are joined by a disulfide bond. Asn409 and Asn440 each carry an N-linked (GlcNAc...) asparagine glycan. A lipid anchor (GPI-anchor amidated serine) is attached at Ser455. A propeptide spans 456-481 (SASSFSCSSYSLVVLIVWFLLSGMMF) (removed in mature form).

The protein belongs to the glycosyl hydrolase 17 family. Contains two additional disulfide bonds.

Its subcellular location is the secreted. The protein localises to the cell wall. It localises to the cell membrane. It catalyses the reaction Hydrolysis of (1-&gt;3)-beta-D-glucosidic linkages in (1-&gt;3)-beta-D-glucans.. The protein is Glucan endo-1,3-beta-glucosidase 8 of Arabidopsis thaliana (Mouse-ear cress).